The sequence spans 548 residues: C2H2-type transcription factor MSN2 (548 aa).

2 consecutive C2H2-type zinc fingers follow at residues 420–448 (FKCE…QDKP) and 449–471 (FECN…ARTH).

As to quaternary structure, interacts with HOG1/OSM1.

It localises to the nucleus. The protein localises to the cytoplasm. Functionally, transcription factor that acts as a key downstream transcription factor in the HOG1-MAPK pathway. Regulates the expression of a series of downstream genes and controls vegetative growth, conidiogenesis, cell wall integrity, stress response, mitochondrial morphology, and pathogenicity. Binds to a putative promoter region 1500 bp upstream of the start codons of the target genes MGG_07019, POX1 and DCI1. Binds to the AGGGG and CCCCT motif of the COS1 promoter region. Involved in fatty acid beta-oxidation by directly regulating the expression of the dienoyl-CoA isomerase DCI1, thereby facilitating invasive hyphal growth during the early infection stage. Targets also the 3-methylglutaconyl-CoA hydratase-encoding gene (AUH1) to control mitochondrial morphology and mitophagy, which are critical for the infectious growth of the pathogen. The sequence is that of C2H2-type transcription factor MSN2 from Pyricularia oryzae (strain 70-15 / ATCC MYA-4617 / FGSC 8958) (Rice blast fungus).